The chain runs to 192 residues: Thymidine kinase (192 aa).

ATP contacts are provided by residues 9 to 16 and 87 to 90; these read SAMNAGKS and DECQ. The Proton acceptor role is filled by Glu88. The Zn(2+) site is built by Cys145, Cys147, Cys182, and His185.

It belongs to the thymidine kinase family. Homotetramer.

The protein localises to the cytoplasm. It carries out the reaction thymidine + ATP = dTMP + ADP + H(+). The sequence is that of Thymidine kinase from Shewanella oneidensis (strain ATCC 700550 / JCM 31522 / CIP 106686 / LMG 19005 / NCIMB 14063 / MR-1).